The chain runs to 292 residues: Tubulin beta chain (292 aa).

The GTP site is built by asparagine 49 and asparagine 71. The tract at residues 265 to 292 is disordered; that stretch reads SEYQQYQDATAEEEGEFDEEEEGDEEAA. Positions 274–292 are enriched in acidic residues; sequence TAEEEGEFDEEEEGDEEAA.

It belongs to the tubulin family. As to quaternary structure, dimer of alpha and beta chains. A typical microtubule is a hollow water-filled tube with an outer diameter of 25 nm and an inner diameter of 15 nM. Alpha-beta heterodimers associate head-to-tail to form protofilaments running lengthwise along the microtubule wall with the beta-tubulin subunit facing the microtubule plus end conferring a structural polarity. Microtubules usually have 13 protofilaments but different protofilament numbers can be found in some organisms and specialized cells. The cofactor is Mg(2+).

It localises to the cytoplasm. The protein localises to the cytoskeleton. In terms of biological role, tubulin is the major constituent of microtubules, a cylinder consisting of laterally associated linear protofilaments composed of alpha- and beta-tubulin heterodimers. Microtubules grow by the addition of GTP-tubulin dimers to the microtubule end, where a stabilizing cap forms. Below the cap, tubulin dimers are in GDP-bound state, owing to GTPase activity of alpha-tubulin. The sequence is that of Tubulin beta chain from Strongylocentrotus purpuratus (Purple sea urchin).